Consider the following 127-residue polypeptide: Cystatin cpi-1 (127 aa).

The N-terminal stretch at 1–19 (MFFPIVWLSVLLIISKSFA) is a signal peptide. A Secondary area of contact motif is present at residues 68–72 (QVVAG). A disulfide bridge links cysteine 86 with cysteine 98.

It belongs to the cystatin family.

Functionally, cysteine protease inhibitor which inhibits members of the peptidase C1 family. Does not inhibit asparaginyl endopeptidase. The chain is Cystatin cpi-1 from Brugia malayi (Filarial nematode worm).